The following is a 150-amino-acid chain: NADH-quinone oxidoreductase subunit A (150 aa).

Helical transmembrane passes span 14–34, 70–90, and 98–118; these read WAFA…LLGA, LVAM…AWAV, and LGFI…FYLV.

Belongs to the complex I subunit 3 family. NDH-1 is composed of 13 different subunits. Subunits NuoA, H, J, K, L, M, N constitute the membrane sector of the complex.

The protein localises to the cell inner membrane. It catalyses the reaction a quinone + NADH + 5 H(+)(in) = a quinol + NAD(+) + 4 H(+)(out). In terms of biological role, NDH-1 shuttles electrons from NADH, via FMN and iron-sulfur (Fe-S) centers, to quinones in the respiratory chain. The immediate electron acceptor for the enzyme in this species is believed to be ubiquinone. Couples the redox reaction to proton translocation (for every two electrons transferred, four hydrogen ions are translocated across the cytoplasmic membrane), and thus conserves the redox energy in a proton gradient. This is NADH-quinone oxidoreductase subunit A from Proteus mirabilis (strain HI4320).